The chain runs to 357 residues: Intracellular hyaluronan-binding protein 4 (357 aa).

3 disordered regions span residues 56–116, 150–186, and 313–357; these read VVAR…HKTA, ERPR…KREF, and PGCG…PALT. Residues 96-115 are compositionally biased toward basic and acidic residues; the sequence is PKQEECGGKDNSRAEKEHKT. The span at 155–171 shows a compositional bias: gly residues; the sequence is CGRGRGGMQGRGRGGGI. Over residues 176–186 the composition is skewed to basic and acidic residues; sequence DGFDQRGKREF. Residues 348 to 357 show a composition bias toward acidic residues; sequence DDPEDFPALT.

Belongs to the SERBP1-HABP4 family. As to quaternary structure, associates with ribosomes; promoting ribosome stabilization. Interacts with EEF2/eEF2; promoting ribosome stabilization.

Its subcellular location is the nucleus. The protein resides in the cytoplasm. It localises to the stress granule. It is found in the sarcoplasm. The protein localises to the nuclear body. Its subcellular location is the nucleolus. The protein resides in the nucleus speckle. It localises to the cajal body. It is found in the gem. Ribosome-binding protein that promotes ribosome hibernation, a process during which ribosomes are stabilized in an inactive state and preserved from proteasomal degradation. Acts via its association with EEF2/eEF2 factor at the A-site of the ribosome, promoting ribosome stabilization in an inactive state compatible with storage. Plays a key role in ribosome hibernation in the mature egg by promoting ribosome stabilization. Ribosomes, which are produced in large quantities during oogenesis, are stored and translationally repressed in the egg and early embryo. The sequence is that of Intracellular hyaluronan-binding protein 4 from Gallus gallus (Chicken).